Reading from the N-terminus, the 330-residue chain is Aspartate--ammonia ligase (330 aa).

It belongs to the class-II aminoacyl-tRNA synthetase family. AsnA subfamily.

It localises to the cytoplasm. It catalyses the reaction L-aspartate + NH4(+) + ATP = L-asparagine + AMP + diphosphate + H(+). The protein operates within amino-acid biosynthesis; L-asparagine biosynthesis; L-asparagine from L-aspartate (ammonia route): step 1/1. This Serratia proteamaculans (strain 568) protein is Aspartate--ammonia ligase.